The sequence spans 447 residues: Exodeoxyribonuclease 7 large subunit (447 aa).

It belongs to the XseA family. Heterooligomer composed of large and small subunits.

Its subcellular location is the cytoplasm. The catalysed reaction is Exonucleolytic cleavage in either 5'- to 3'- or 3'- to 5'-direction to yield nucleoside 5'-phosphates.. Functionally, bidirectionally degrades single-stranded DNA into large acid-insoluble oligonucleotides, which are then degraded further into small acid-soluble oligonucleotides. The sequence is that of Exodeoxyribonuclease 7 large subunit from Exiguobacterium sibiricum (strain DSM 17290 / CCUG 55495 / CIP 109462 / JCM 13490 / 255-15).